The following is an 81-amino-acid chain: Small ribosomal subunit protein bS16 (81 aa).

Belongs to the bacterial ribosomal protein bS16 family.

In Neisseria meningitidis serogroup C (strain 053442), this protein is Small ribosomal subunit protein bS16.